Consider the following 370-residue polypeptide: Peptidyl-prolyl cis-trans isomerase D (370 aa).

Ser5 is modified (phosphoserine). Residues 19–183 (FFDVDIGGER…KLCVIAECGE (165 aa)) form the PPIase cyclophilin-type domain. The residue at position 171 (Lys171) is an N6-acetyllysine. A chaperone activity region spans residues 185-215 (KEGDDWGIFPKDGSGDSHPDFPEDADIDLKD). At Ser198 the chain carries Phosphoserine. Residues 214–370 (KDVDKILLIS…EKAVYAKMFA (157 aa)) are interaction with HSP90AB1. TPR repeat units lie at residues 223–256 (SEDLKNIGNTFFKSQNWEMAIKKYAKVLRYVDSS), 273–306 (LSCVLNIGACKLKMSNWQGAIDSCLEALEMDPSN), and 307–340 (TKALYRKAQGWQGLKEYDQALADLKKAQEIAPGD).

This sequence belongs to the cyclophilin-type PPIase family. PPIase D subfamily. As to quaternary structure, identified in ESR1 or NR3C1/GCR steroid receptor-chaperone complexes. Found in HSP90 chaperone complexes with kinase clients LCK or EIF2AK1. Two monomers associate with one HSP90 homodimer. Interacts with HSP90AA1. Interacts with HSP90AB1; PPID and FKBP4 compete for binding to HSP90AB1 and the interaction is mutually exclusive with the PPID:HSPA8 interaction. Interacts with HSPA8; PPID and STIP1 but not FKBP4 compete for binding to HSPA8 and the interaction is mutually exclusive with the PPID:HSP90AB1 interaction. Interacts with S100A1 and S100A2; the interactions dissociate the PPID:HSP90AA1 interaction. Interacts with S100A6. Interacts with MYB, ILF2, XRCC6, RACK1 and RPS3. Interacts with cytoplasmic dynein 1 intermediate chain (DYNC1I1 or DYNC1I2).

It localises to the cytoplasm. It is found in the nucleus. The protein localises to the nucleolus. The protein resides in the nucleoplasm. The enzyme catalyses [protein]-peptidylproline (omega=180) = [protein]-peptidylproline (omega=0). With respect to regulation, less sensitive to inhibition by cyclosporin A than is CYP-18. In terms of biological role, PPIase that catalyzes the cis-trans isomerization of proline imidic peptide bonds in oligopeptides and may therefore assist protein folding. Proposed to act as a co-chaperone in HSP90 complexes such as in unligated steroid receptors heterocomplexes. Different co-chaperones seem to compete for association with HSP90 thus establishing distinct HSP90-co-chaperone-receptor complexes with the potential to exert tissue-specific receptor activity control. May have a preference for estrogen receptor complexes and is not found in glucocorticoid receptor complexes. May be involved in cytoplasmic dynein-dependent movement of the receptor from the cytoplasm to the nucleus. May regulate MYB by inhibiting its DNA-binding activity. Involved in regulation of AHR signaling by promoting the formation of the AHR:ARNT dimer; the function is independent of HSP90 but requires the chaperone activity region. Involved in regulation of UV radiation-induced apoptosis. The sequence is that of Peptidyl-prolyl cis-trans isomerase D from Mus musculus (Mouse).